The following is a 254-amino-acid chain: NAD-dependent protein deacylase (254 aa).

A Deacetylase sirtuin-type domain is found at 1–250; it reads MERLEEARKR…LPPSPEDQAE (250 aa). 22-41 contributes to the NAD(+) binding site; sequence GAGISKPSGIPTFRDAEGLW. Substrate is bound by residues Tyr66 and Arg69. 104-107 is a binding site for NAD(+); the sequence is QNVD. Catalysis depends on His122, which acts as the Proton acceptor. Residues Cys130, Cys133, Cys149, and Cys152 each coordinate Zn(2+). NAD(+)-binding positions include 189-191, 215-217, and Ala233; these read GTS and NPE.

The protein belongs to the sirtuin family. Class III subfamily. Requires Zn(2+) as cofactor.

It localises to the cytoplasm. It carries out the reaction N(6)-acetyl-L-lysyl-[protein] + NAD(+) + H2O = 2''-O-acetyl-ADP-D-ribose + nicotinamide + L-lysyl-[protein]. It catalyses the reaction N(6)-succinyl-L-lysyl-[protein] + NAD(+) + H2O = 2''-O-succinyl-ADP-D-ribose + nicotinamide + L-lysyl-[protein]. NAD-dependent lysine deacetylase and desuccinylase that specifically removes acetyl and succinyl groups on target proteins. Modulates the activities of several proteins which are inactive in their acylated form. The chain is NAD-dependent protein deacylase from Thermus thermophilus (strain ATCC 27634 / DSM 579 / HB8).